A 244-amino-acid chain; its full sequence is MSKFYIENINLLNSEKKNNILSELNLLLSNYSAEERISWALSHLPHTQIMSSSFGIQSTVLLHLIIKKKPDIPVVLIDTGYLFPETYNFIDFLTNKFHLNLKVFRSTISSAWQEARYGKLWEKGIEGIDFYNNINKVQPMNFALNELSVQTWFAGLRRDQSKSRNLLPYLSIKKGIFKILPILDWSKDKIKDYLKENNLDTHPLYNNGYSSVGDTHTTKKHMPGMLEEETRFFGLKRECGLHEN.

C239 functions as the Nucleophile; cysteine thiosulfonate intermediate in the catalytic mechanism.

It belongs to the PAPS reductase family. CysH subfamily.

Its subcellular location is the cytoplasm. The catalysed reaction is [thioredoxin]-disulfide + sulfite + adenosine 3',5'-bisphosphate + 2 H(+) = [thioredoxin]-dithiol + 3'-phosphoadenylyl sulfate. The protein operates within sulfur metabolism; hydrogen sulfide biosynthesis; sulfite from sulfate: step 3/3. In terms of biological role, catalyzes the formation of sulfite from phosphoadenosine 5'-phosphosulfate (PAPS) using thioredoxin as an electron donor. The chain is Phosphoadenosine 5'-phosphosulfate reductase from Buchnera aphidicola subsp. Acyrthosiphon pisum (strain Tuc7).